The following is a 658-amino-acid chain: Vertnin (658 aa).

The protein belongs to the vertnin family.

It localises to the nucleus. Its function is as follows. Acts as a transcription factor that regulates development of thoracic vertebrae. This is Vertnin (VRTN) from Bos taurus (Bovine).